The chain runs to 110 residues: Large ribosomal subunit protein uL22 (110 aa).

It belongs to the universal ribosomal protein uL22 family. Part of the 50S ribosomal subunit.

In terms of biological role, this protein binds specifically to 23S rRNA; its binding is stimulated by other ribosomal proteins, e.g. L4, L17, and L20. It is important during the early stages of 50S assembly. It makes multiple contacts with different domains of the 23S rRNA in the assembled 50S subunit and ribosome. Functionally, the globular domain of the protein is located near the polypeptide exit tunnel on the outside of the subunit, while an extended beta-hairpin is found that lines the wall of the exit tunnel in the center of the 70S ribosome. The chain is Large ribosomal subunit protein uL22 from Chromohalobacter salexigens (strain ATCC BAA-138 / DSM 3043 / CIP 106854 / NCIMB 13768 / 1H11).